A 240-amino-acid chain; its full sequence is Ribosomal RNA large subunit methyltransferase E (240 aa).

The span at 1 to 20 (MSKAGGNKGGSRTGGRGGAG) shows a compositional bias: gly residues. Residues 1-33 (MSKAGGNKGGSRTGGRGGAGSSNLHVRVKKKAG) are disordered. Residues Gly92, Trp94, Asp115, Asp131, and Asp155 each contribute to the S-adenosyl-L-methionine site. Lys195 functions as the Proton acceptor in the catalytic mechanism.

Belongs to the class I-like SAM-binding methyltransferase superfamily. RNA methyltransferase RlmE family.

It is found in the cytoplasm. The enzyme catalyses uridine(2552) in 23S rRNA + S-adenosyl-L-methionine = 2'-O-methyluridine(2552) in 23S rRNA + S-adenosyl-L-homocysteine + H(+). In terms of biological role, specifically methylates the uridine in position 2552 of 23S rRNA at the 2'-O position of the ribose in the fully assembled 50S ribosomal subunit. This Brucella abortus (strain S19) protein is Ribosomal RNA large subunit methyltransferase E.